The primary structure comprises 422 residues: Serine hydroxymethyltransferase (422 aa).

121–123 lines the (6S)-5,6,7,8-tetrahydrofolate pocket; it reads GHI. Lys-227 is modified (N6-(pyridoxal phosphate)lysine). Residue Glu-245 participates in (6S)-5,6,7,8-tetrahydrofolate binding.

Belongs to the SHMT family. Homodimer. The cofactor is pyridoxal 5'-phosphate.

It localises to the cytoplasm. The enzyme catalyses 5,10-methylenetetrahydromethanopterin + glycine + H2O = 5,6,7,8-tetrahydromethanopterin + L-serine. Its pathway is amino-acid biosynthesis; glycine biosynthesis; glycine from L-serine: step 1/1. Catalyzes the reversible interconversion of serine and glycine with tetrahydromethanopterin (H4MPT) serving as the one-carbon carrier. Also exhibits a pteridine-independent aldolase activity toward beta-hydroxyamino acids, producing glycine and aldehydes, via a retro-aldol mechanism. The chain is Serine hydroxymethyltransferase from Methanobrevibacter smithii (strain ATCC 35061 / DSM 861 / OCM 144 / PS).